The sequence spans 161 residues: Long arms of the bivalent protein 1 (161 aa).

Positions 72–75 (KVIW) match the PP1 binding motif motif. Positions 85-161 (GTMFEDFKED…SDKTMCSGQS (77 aa)) are disordered. The span at 97 to 115 (QESVSSISNNEANWGSSVN) shows a compositional bias: polar residues. Residues 120–129 (NYEKMQKEET) are compositionally biased toward basic and acidic residues. Acidic residues predominate over residues 130–151 (FDPYDSDSDTSEDSDFDEDFED).

In terms of assembly, interacts with gsp-1 and gsp-2; the interaction is direct.

The protein localises to the chromosome. Its subcellular location is the nucleus. Its function is as follows. Involved in sister chromatid cohesion during mitosis and meiosis. In association with the gsp-2 phosphatase, it both restricts the localization and antagonizes the function of the air-2 kinase during meiosis I and mitosis to promote chromatid cohesion and spindle attachment. This in turn, drives germ cell immortality. Furthermore, may play a role in ensuring the timely assembly of the synaptonemal complex during prophase I of meiosis. This Caenorhabditis elegans protein is Long arms of the bivalent protein 1.